Consider the following 709-residue polypeptide: Leucine-rich repeat-containing protein 4B (709 aa).

Positions 1–38 are cleaved as a signal peptide; the sequence is MAQAHIRGSPCPLLPPGRMSWPHGALLLLWLFSPPLRA. In terms of domain architecture, LRRNT spans 50-88; the sequence is GGGSPPATSCPAACSCSNQASRVICTRRELAEVPASIPV. LRR repeat units lie at residues 89–110, 113–134, 137–158, 161–182, 185–207, 210–231, 232–253, 256–277, and 280–301; these read NTRYLNLQENSIQVIRTDTFKH, HLEILQLSKNLVRKIEVGAFNG, SLNTLELFDNRLTTVPTQAFEY, KLRELWLRNNPIESIPSYAFNR, SLRRLDLGELKRLEYISEAAFEG, NLRYLNLGMCNLKDIPNLTALV, RLEELELSGNRLDLIRPGSFQG, SLRKLWLMHAQVATIERNAFDD, and SLEELNLSHNNLMSLPHDLFTP. Asn-226 carries an N-linked (GlcNAc...) asparagine glycan. Residues Asn-285, Asn-335, Asn-376, Asn-402, Asn-424, Asn-427, Asn-446, and Asn-454 are each glycosylated (N-linked (GlcNAc...) asparagine). The region spanning 313 to 365 is the LRRCT domain; it reads NPWHCNCDVLWLSWWLKETVPSNTTCCARCHAPAGLKGRYIGELDQSHFTCYA. The Ig-like C2-type domain maps to 366-454; the sequence is PVIVEPPTDL…GNTTASATLN (89 aa). A disulfide bridge connects residues Cys-387 and Cys-438. Positions 496–552 are disordered; sequence TQPGEEAQQPRGTEKEPPGPTTDGAWGGGRPDAAAPASASTTAPAPRSSRPTEKAFT. Over residues 528–544 the composition is skewed to low complexity; the sequence is AAAPASASTTAPAPRSS. The chain crosses the membrane as a helical span at residues 575–595; the sequence is IIIGCFVAITFMAAVMLVAFY. Ser-689 carries the post-translational modification Phosphoserine.

As to quaternary structure, interacts with PTPRF. Interacts with DLG4. Post-translationally, N-glycosylated. O-glycosylated; contains sialic acid.

Its subcellular location is the membrane. It is found in the presynaptic cell membrane. Functionally, synaptic adhesion protein. Regulates the formation of excitatory synapses. The trans-synaptic adhesion between LRRC4B and PTPRF regulates the formation of excitatory synapses in a bidirectional manner. This is Leucine-rich repeat-containing protein 4B (Lrrc4b) from Mus musculus (Mouse).